The primary structure comprises 470 residues: Asparagine--tRNA ligase (470 aa).

Belongs to the class-II aminoacyl-tRNA synthetase family. In terms of assembly, homodimer.

It is found in the cytoplasm. The catalysed reaction is tRNA(Asn) + L-asparagine + ATP = L-asparaginyl-tRNA(Asn) + AMP + diphosphate + H(+). The polypeptide is Asparagine--tRNA ligase (Blochmanniella floridana).